Consider the following 372-residue polypeptide: GDP-mannose 4,6-dehydratase (372 aa).

Residues Gly9–Asp14, Asp64–Leu65, Leu86–Ser90, and Tyr101 contribute to the NADP(+) site. Thr133 is an active-site residue. Catalysis depends on nucleophile residues Glu135 and Tyr157. Positions 161, 187, and 192 each coordinate NADP(+).

It belongs to the NAD(P)-dependent epimerase/dehydratase family. GDP-mannose 4,6-dehydratase subfamily. Requires NADP(+) as cofactor.

It carries out the reaction GDP-alpha-D-mannose = GDP-4-dehydro-alpha-D-rhamnose + H2O. It functions in the pathway nucleotide-sugar biosynthesis; GDP-L-fucose biosynthesis via de novo pathway; GDP-L-fucose from GDP-alpha-D-mannose: step 1/2. Functionally, catalyzes the conversion of GDP-D-mannose to GDP-4-dehydro-6-deoxy-D-mannose. The protein is GDP-mannose 4,6-dehydratase of Vibrio cholerae.